The following is a 375-amino-acid chain: MQCALYDAGRCRSCQWITQSVNEQLSAKTADLHRLLAGLPVEQWCAPISGPEQHFRNKAKMVVSGSVEKPLFGMLHRDGTPVDLCACPLYPASFAPVFSALKPFIARAGLTPYNVARKRGELKYLLLTESQFDGGMMLRFVLRSETKLTQLRAALPWLRAQLPQLRVITANIQPVHMAIMEGETEIYLTDQQALAERFNDVPLWIRPQSFFQTNPTVASRLYATARDWVGQLPVRHMWDLFCGVGGFGLHCATPQMQLTGIEIAPEAIACAKQSAAELGLTRLHFQALDSTQFATAQGETPDLVLVNPPRRGIGKPLCDYLAQMAPRFIIYSSCNAQTMAQDIRHLPNYRIQRVQLFDMFPHTAHYEVLTLLCRL.

[4Fe-4S] cluster is bound by residues cysteine 3, cysteine 11, cysteine 14, and cysteine 87. S-adenosyl-L-methionine-binding residues include glutamine 212, phenylalanine 241, glutamate 262, and asparagine 307. Cysteine 334 acts as the Nucleophile in catalysis.

The protein belongs to the class I-like SAM-binding methyltransferase superfamily. RNA M5U methyltransferase family. RlmC subfamily.

The catalysed reaction is uridine(747) in 23S rRNA + S-adenosyl-L-methionine = 5-methyluridine(747) in 23S rRNA + S-adenosyl-L-homocysteine + H(+). Functionally, catalyzes the formation of 5-methyl-uridine at position 747 (m5U747) in 23S rRNA. In Salmonella typhi, this protein is 23S rRNA (uracil(747)-C(5))-methyltransferase RlmC.